The sequence spans 232 residues: Large ribosomal subunit protein uL1 (232 aa).

It belongs to the universal ribosomal protein uL1 family. In terms of assembly, part of the 50S ribosomal subunit.

Binds directly to 23S rRNA. The L1 stalk is quite mobile in the ribosome, and is involved in E site tRNA release. Its function is as follows. Protein L1 is also a translational repressor protein, it controls the translation of the L11 operon by binding to its mRNA. This is Large ribosomal subunit protein uL1 from Colwellia psychrerythraea (strain 34H / ATCC BAA-681) (Vibrio psychroerythus).